Consider the following 175-residue polypeptide: Ferritin light chain (175 aa).

N-acetylserine is present on serine 2. Positions 7 to 156 constitute a Ferritin-like diiron domain; it reads QNYSTDVEAA…DHLTNLHRLG (150 aa). Residues glutamate 54, glutamate 57, glutamate 58, glutamate 61, and glutamate 64 each contribute to the Fe cation site. The interval 54–61 is catalytic site for iron oxidation; that stretch reads ELAEEKRE.

It belongs to the ferritin family. In terms of assembly, oligomer of 24 subunits. There are two types of subunits: L (light) chain and H (heavy) chain. The major chain can be light or heavy, depending on the species and tissue type. The functional molecule forms a roughly spherical shell with a diameter of 12 nm and contains a central cavity into which the insoluble mineral iron core is deposited. Interacts with NCOA4.

The protein resides in the cytoplasmic vesicle. It is found in the autophagosome. It localises to the cytoplasm. The protein localises to the autolysosome. Its function is as follows. Stores iron in a soluble, non-toxic, readily available form. Important for iron homeostasis. Iron is taken up in the ferrous form and deposited as ferric hydroxides after oxidation. Also plays a role in delivery of iron to cells. Mediates iron uptake in capsule cells of the developing kidney. Delivery to lysosomes by the cargo receptor NCOA4 for autophagic degradation and release or iron. This Pongo abelii (Sumatran orangutan) protein is Ferritin light chain (FTL).